Consider the following 108-residue polypeptide: UPF0102 protein SO_0299 (108 aa).

The protein belongs to the UPF0102 family.

This Shewanella oneidensis (strain ATCC 700550 / JCM 31522 / CIP 106686 / LMG 19005 / NCIMB 14063 / MR-1) protein is UPF0102 protein SO_0299.